The chain runs to 221 residues: uncharacterized protein (221 aa).

Residues arginine 33 to leucine 167 form the MOSC domain.

This is an uncharacterized protein from Bacillus subtilis (strain 168).